The primary structure comprises 174 residues: Trypsin inhibitor BvTI (174 aa).

Cystine bridges form between Cys41–Cys84 and Cys131–Cys138.

The protein belongs to the protease inhibitor I3 (leguminous Kunitz-type inhibitor) family.

The protein resides in the secreted. Functionally, inhibits bovine trypsin and chymotrypsin, and human plasmin, plasma kallikrein and factor XIIa. The protein is Trypsin inhibitor BvTI of Bauhinia variegata (Purple orchid tree).